Here is a 136-residue protein sequence, read N- to C-terminus: Small ribosomal subunit protein uS9 (136 aa).

The disordered stretch occupies residues 97-136; that stretch reads SPDNRKPLKTEGHLSRDPRAKERRKYGLKKARKAPQFSKR. The span at 98-116 shows a compositional bias: basic and acidic residues; sequence PDNRKPLKTEGHLSRDPRA. The segment covering 117–136 has biased composition (basic residues); the sequence is KERRKYGLKKARKAPQFSKR.

It belongs to the universal ribosomal protein uS9 family.

This Prochlorococcus marinus (strain AS9601) protein is Small ribosomal subunit protein uS9.